Here is a 466-residue protein sequence, read N- to C-terminus: Collagenase 3 (466 aa).

Positions alanine 1–serine 13 are cleaved as a signal peptide. A propeptide spans leucine 14–valine 98 (activation peptide). Residues proline 89–valine 96 carry the Cysteine switch motif. Cysteine 91 provides a ligand contact to Zn(2+). N-linked (GlcNAc...) asparagine glycosylation occurs at asparagine 112. Aspartate 123 lines the Ca(2+) pocket. N-linked (GlcNAc...) asparagine glycosylation occurs at asparagine 147. Aspartate 157 contacts Ca(2+). Histidine 167 and aspartate 169 together coordinate Zn(2+). Residues tyrosine 171–tyrosine 241 are interaction with TIMP2. Residues aspartate 174, glycine 175, serine 177, and leucine 179 each coordinate Ca(2+). Histidine 182 is a Zn(2+) binding site. The Ca(2+) site is built by asparagine 189, glycine 191, and aspartate 193. Histidine 195 serves as a coordination point for Zn(2+). Residues aspartate 197, aspartate 198, and glutamate 200 each coordinate Ca(2+). Position 217 (histidine 217) interacts with Zn(2+). Residue glutamate 218 is part of the active site. Residues histidine 221, histidine 227, and methionine 235 each contribute to the Zn(2+) site. The interval glutamine 258–cysteine 279 is disordered. An interaction with collagen region spans residues proline 263–cysteine 466. A compositionally biased stretch (basic and acidic residues) spans proline 268 to cysteine 279. Hemopexin repeat units lie at residues proline 276–leucine 325, proline 326–lysine 372, valine 374–isoleucine 422, and glycine 423–cysteine 466. Cysteines 279 and 466 form a disulfide. Residues aspartate 286, isoleucine 288, aspartate 330, and alanine 332 each coordinate Ca(2+). Tyrosine 361 bears the Phosphotyrosine; by PKDCC mark. Ca(2+) contacts are provided by serine 378 and alanine 380. N-linked (GlcNAc...) asparagine glycosylation occurs at asparagine 404. 2 residues coordinate Ca(2+): aspartate 427 and valine 429.

The protein belongs to the peptidase M10A family. Ca(2+) serves as cofactor. It depends on Zn(2+) as a cofactor. Post-translationally, the proenzyme is activated by removal of the propeptide; this cleavage can be effected by other matrix metalloproteinases, such as MMP2, MMP3 and MMP14 and may involve several cleavage steps. Cleavage can also be autocatalytic, after partial maturation by another protease or after treatment with 4-aminophenylmercuric acetate (APMA) (in vitro). In terms of processing, N-glycosylated. Tyrosine phosphorylated by PKDCC/VLK.

It localises to the secreted. The protein localises to the extracellular space. The protein resides in the extracellular matrix. In terms of biological role, plays a role in the degradation of extracellular matrix proteins including fibrillar collagen, fibronectin, TNC and ACAN. Cleaves triple helical collagens, including type I, type II and type III collagen, but has the highest activity with soluble type II collagen. Can also degrade collagen type IV, type XIV and type X. May also function by activating or degrading key regulatory proteins, such as TGFB1 and CCN2. Plays a role in wound healing, tissue remodeling, cartilage degradation, bone development, bone mineralization and ossification. Required for normal embryonic bone development and ossification. Plays a role in the healing of bone fractures via endochondral ossification. Plays a role in wound healing, probably by a mechanism that involves proteolytic activation of TGFB1 and degradation of CCN2. Plays a role in keratinocyte migration during wound healing. May play a role in cell migration and in tumor cell invasion. The polypeptide is Collagenase 3 (Mmp13) (Rattus norvegicus (Rat)).